Reading from the N-terminus, the 103-residue chain is Small ribosomal subunit protein uS10 (103 aa).

The protein belongs to the universal ribosomal protein uS10 family. In terms of assembly, part of the 30S ribosomal subunit.

In terms of biological role, involved in the binding of tRNA to the ribosomes. This chain is Small ribosomal subunit protein uS10, found in Campylobacter fetus subsp. fetus (strain 82-40).